Here is a 143-residue protein sequence, read N- to C-terminus: Nucleoside diphosphate kinase (143 aa).

ATP contacts are provided by lysine 11, phenylalanine 59, arginine 87, threonine 93, arginine 104, and asparagine 114. Histidine 117 acts as the Pros-phosphohistidine intermediate in catalysis.

The protein belongs to the NDK family. As to quaternary structure, homotetramer. Requires Mg(2+) as cofactor.

The protein resides in the cytoplasm. It catalyses the reaction a 2'-deoxyribonucleoside 5'-diphosphate + ATP = a 2'-deoxyribonucleoside 5'-triphosphate + ADP. The catalysed reaction is a ribonucleoside 5'-diphosphate + ATP = a ribonucleoside 5'-triphosphate + ADP. Major role in the synthesis of nucleoside triphosphates other than ATP. The ATP gamma phosphate is transferred to the NDP beta phosphate via a ping-pong mechanism, using a phosphorylated active-site intermediate. The protein is Nucleoside diphosphate kinase of Cronobacter sakazakii (strain ATCC BAA-894) (Enterobacter sakazakii).